We begin with the raw amino-acid sequence, 607 residues long: MNLEELKKRQEKIRNFSIIAHIDHGKSTLADRILEKTETVSSREMQAQLLDSMDLERERGITIKLNAIELNYTAKDGETYIFHLIDTPGHVDFTYEVSRSLAACEGAILVVDAAQGIEAQTLANVYLALDNDLEIMPIINKIDLPAADPERVRTEIEDVIGLDASEAVLASAKAGIGIEEILEQIVEKVPAPTGDVTAPLKALIFDSVYDAYRGVILQVRVMDGVVKPGDKIQLMSNSKTFDVAEVGIFTPKAVGRDFLATGDVGYIAASIKTVQDTRVGDTVTLATNPAAEPLHGYKQMNPMVFAGLYPIESNKYNDLREALEKLQLNDASLQFEPETSQALGFGFRCGFLGLLHMDVIQERLEREFNIDLIMTAPSVIYKVNLTDGESMDVSNPSEFPDPTKIATIEEPYVKAQIMVPQEFVGAVMELAQRKRGDFVTMDYIDDNRVNVIYQIPLAEIVFDFFDKLKSSTRGYASFDYELSEYRPSKLVKMDILLNGDKVDALSFIVHKDFAYERGKLIVDKLKKIIPRQQFEVPIQAAIGHKIVARTDIKALRKNVLAKCYGGDVSRKRKLLEKQKAGKKRMKSIGSVEVPQEAFLSVLSMDEE.

Residues 11–193 (EKIRNFSIIA…QIVEKVPAPT (183 aa)) form the tr-type G domain. GTP contacts are provided by residues 23-28 (DHGKST) and 140-143 (NKID).

This sequence belongs to the TRAFAC class translation factor GTPase superfamily. Classic translation factor GTPase family. LepA subfamily.

The protein resides in the cell membrane. It catalyses the reaction GTP + H2O = GDP + phosphate + H(+). In terms of biological role, required for accurate and efficient protein synthesis under certain stress conditions. May act as a fidelity factor of the translation reaction, by catalyzing a one-codon backward translocation of tRNAs on improperly translocated ribosomes. Back-translocation proceeds from a post-translocation (POST) complex to a pre-translocation (PRE) complex, thus giving elongation factor G a second chance to translocate the tRNAs correctly. Binds to ribosomes in a GTP-dependent manner. In Streptococcus pneumoniae serotype 19F (strain G54), this protein is Elongation factor 4.